The sequence spans 554 residues: Propanediol dehydratase large subunit (554 aa).

The protein belongs to the diol/glycerol dehydratase large subunit family. The propanediol dehydratase enzyme is a heterotrimeric complex composed of a large (PduC), a medium (PduD) and a small (PduE) subunit. It depends on adenosylcob(III)alamin as a cofactor.

It is found in the bacterial microcompartment. The enzyme catalyses propane-1,2-diol = propanal + H2O. Its pathway is polyol metabolism; 1,2-propanediol degradation. In terms of biological role, part of the PduCDE complex that catalyzes the dehydration of 1,2-propanediol (1,2-PD) to propionaldehyde. This subunit is directly targeted to the bacterial microcompartment (BMC). Functionally, expression of a cosmid containing the full 21-gene pdu operon in E.coli allows E.coli to grow on 1,2-propanediol (1,2-PD) with the appearance of BMCs in its cytoplasm. The 1,2-PD-specific bacterial microcompartment (BMC) concentrates low levels of 1,2-PD catabolic enzymes, concentrates volatile reaction intermediates thus enhancing pathway flux and keeps the level of toxic, mutagenic propionaldehyde low. The polypeptide is Propanediol dehydratase large subunit (Citrobacter freundii).